Consider the following 415-residue polypeptide: ATP-dependent RNA helicase RhlB (415 aa).

The Q motif signature appears at 9–37 (QRFSDLSLHPIVRDTLAKKGFDFCTPIQA). In terms of domain architecture, Helicase ATP-binding spans 40–218 (LPISLNGRDV…FEDMNDPEYI (179 aa)). 53–60 (AQTGTGKT) is an ATP binding site. Residues 164 to 167 (DEAD) carry the DEAD box motif. In terms of domain architecture, Helicase C-terminal spans 241-389 (DKMALLLTLM…VSQYETEALL (149 aa)).

It belongs to the DEAD box helicase family. RhlB subfamily. Component of the RNA degradosome, which is a multiprotein complex involved in RNA processing and mRNA degradation.

It localises to the cytoplasm. The catalysed reaction is ATP + H2O = ADP + phosphate + H(+). DEAD-box RNA helicase involved in RNA degradation. Has RNA-dependent ATPase activity and unwinds double-stranded RNA. This is ATP-dependent RNA helicase RhlB from Haemophilus influenzae (strain PittEE).